Consider the following 76-residue polypeptide: Protein RALF-like 26 (76 aa).

The N-terminal stretch at 1 to 22 (MKAWMIILLVICVAVVVEQSEA) is a signal peptide. A disulfide bridge links cysteine 37 with cysteine 46. The N-linked (GlcNAc...) asparagine glycan is linked to asparagine 61. Cysteines 66 and 72 form a disulfide.

The protein belongs to the plant rapid alkalinization factor (RALF) family.

The protein localises to the secreted. Cell signaling peptide that may regulate plant stress, growth, and development. Mediates a rapid alkalinization of extracellular space by mediating a transient increase in the cytoplasmic Ca(2+) concentration leading to a calcium-dependent signaling events through a cell surface receptor and a concomitant activation of some intracellular mitogen-activated protein kinases. This is Protein RALF-like 26 (RALFL26) from Arabidopsis thaliana (Mouse-ear cress).